The chain runs to 140 residues: Transcription antitermination protein NusB (140 aa).

It belongs to the NusB family.

Functionally, involved in transcription antitermination. Required for transcription of ribosomal RNA (rRNA) genes. Binds specifically to the boxA antiterminator sequence of the ribosomal RNA (rrn) operons. In Streptococcus pneumoniae serotype 2 (strain D39 / NCTC 7466), this protein is Transcription antitermination protein NusB.